A 265-amino-acid chain; its full sequence is DNA repair protein RecO (265 aa).

This sequence belongs to the RecO family.

Involved in DNA repair and RecF pathway recombination. In Mycobacterium marinum (strain ATCC BAA-535 / M), this protein is DNA repair protein RecO.